Consider the following 373-residue polypeptide: Histidinol-phosphate aminotransferase (373 aa).

At Lys233 the chain carries N6-(pyridoxal phosphate)lysine.

Belongs to the class-II pyridoxal-phosphate-dependent aminotransferase family. Histidinol-phosphate aminotransferase subfamily. As to quaternary structure, homodimer. The cofactor is pyridoxal 5'-phosphate.

The enzyme catalyses L-histidinol phosphate + 2-oxoglutarate = 3-(imidazol-4-yl)-2-oxopropyl phosphate + L-glutamate. It functions in the pathway amino-acid biosynthesis; L-histidine biosynthesis; L-histidine from 5-phospho-alpha-D-ribose 1-diphosphate: step 7/9. This Nitratidesulfovibrio vulgaris (strain DP4) (Desulfovibrio vulgaris) protein is Histidinol-phosphate aminotransferase.